Here is a 139-residue protein sequence, read N- to C-terminus: Large ribosomal subunit protein uL16c (139 aa).

The segment at 1 to 20 (MLSPKRTKYRKHHRGRMKGK) is disordered.

This sequence belongs to the universal ribosomal protein uL16 family. As to quaternary structure, part of the 50S ribosomal subunit.

The protein localises to the plastid. It is found in the chloroplast. The chain is Large ribosomal subunit protein uL16c from Pleurastrum terricola (Filamentous green alga).